The following is a 427-amino-acid chain: ETS domain-containing protein Elk-1 (427 aa).

A DNA-binding region (ETS) is located at residues 5-86 (VTLWQFLLQL…SGQKFVYKFV (82 aa)). Disordered stretches follow at residues 116–146 (ATVH…GLAR), 166–202 (LQPQ…SPNP), and 226–252 (PNQK…VEGP). Glycyl lysine isopeptide (Lys-Gly) (interchain with G-Cter in SUMO) cross-links involve residues K229, K248, and K253. Positions 300–310 (STSTTEITQPQ) are enriched in polar residues. A disordered region spans residues 300 to 350 (STSTTEITQPQKGRKPRDLELPLSPSLLGGQGPERTPGSGTSSGLQAQGPA). S323 carries the post-translational modification Phosphoserine; by MAPK1. Phosphothreonine; by MAPK1 occurs at positions 335, 352, 362, and 367. The tract at residues 348-398 (GPALTPSLLPTHTLTPVLLTPSSLPPSIHFWSTLSPIAPRSPAKLSFQFPS) is sufficient for interaction with MAD2L2. A glycan (O-linked (GlcNAc) threonine) is linked at T380. S382 bears the Phosphoserine; by MAPK1 and MAPK8 mark. S388 carries the phosphoserine; by MAPK1 modification. T416 bears the Phosphothreonine; by MAPK1 mark. S421 is subject to Phosphoserine; by MAPK1.

The protein belongs to the ETS family. As to quaternary structure, interacts in its sumoylated form with PIAS2/PIASX which enhances its transcriptional activator activity. Interacts with MAD2L2; the interaction is direct and promotes phosphorylation by the kinases MAPK8 and/or MAPK9. Interacts with POU1F1. In terms of processing, sumoylation represses transcriptional activator activity as it results in recruitment of HDAC2 to target gene promoters which leads to decreased histone acetylation and reduced transactivator activity. It also regulates nuclear retention. On mitogenic stimulation, phosphorylated on C-terminal serine and threonine residues by MAPK1. Ser-382 and Ser-388 are the preferred sites for MAPK1. In vitro, phosphorylation by MAPK1 potentiates ternary complex formation with the serum responses factors, SRE and SRF. Also phosphorylated on Ser-382 by MAPK8 and/or MAKP9. Phosphorylation leads to loss of sumoylation and restores transcriptional activator activity. Phosphorylated and activated by CAMK4, MAPK11, MAPK12 and MAPK14. Upon bFGF stimulus, phosphorylated by PAK1. Phosphorylated by PRP4K at Thr-416; phosphorylation activation ELK1 transcriptional activity.

The protein localises to the nucleus. Its function is as follows. Transcription factor that binds to purine-rich DNA sequences. Forms a ternary complex with SRF and the ETS and SRF motifs of the serum response element (SRE) on the promoter region of immediate early genes such as FOS and IER2. Induces target gene transcription upon JNK and MAPK-signaling pathways stimulation. The protein is ETS domain-containing protein Elk-1 of Rattus norvegicus (Rat).